Reading from the N-terminus, the 264-residue chain is Teichoic acids export ATP-binding protein TagH (264 aa).

The ABC transporter domain occupies 24 to 243 (IKDALIPKNK…YEAFLKTFKK (220 aa)). An ATP-binding site is contributed by 57 to 64 (GINGSGKS).

The protein belongs to the ABC transporter superfamily. Teichoic acids exporter (TC 3.A.1.104.1) family. The complex is composed of two ATP-binding proteins (TagH) and two transmembrane proteins (TagG).

It localises to the cell membrane. It catalyses the reaction ATP + H2O + teichoic acidSide 1 = ADP + phosphate + teichoic acidSide 2.. Its function is as follows. Part of the ABC transporter complex TagGH involved in teichoic acids export. Responsible for energy coupling to the transport system. This chain is Teichoic acids export ATP-binding protein TagH, found in Staphylococcus epidermidis (strain ATCC 35984 / DSM 28319 / BCRC 17069 / CCUG 31568 / BM 3577 / RP62A).